The chain runs to 358 residues: Peptide chain release factor 1 (358 aa).

Q233 carries the post-translational modification N5-methylglutamine.

This sequence belongs to the prokaryotic/mitochondrial release factor family. Post-translationally, methylated by PrmC. Methylation increases the termination efficiency of RF1.

The protein localises to the cytoplasm. Functionally, peptide chain release factor 1 directs the termination of translation in response to the peptide chain termination codons UAG and UAA. In Lysinibacillus sphaericus (strain C3-41), this protein is Peptide chain release factor 1.